Consider the following 762-residue polypeptide: 5-methyltetrahydropteroyltriglutamate--homocysteine methyltransferase (762 aa).

Residues 17–20 (REWK) and Lys-111 each bind 5-methyltetrahydropteroyltri-L-glutamate. L-homocysteine is bound by residues 435–437 (IGS) and Glu-488. L-methionine contacts are provided by residues 435–437 (IGS) and Glu-488. 5-methyltetrahydropteroyltri-L-glutamate-binding positions include 519 to 520 (RC) and Trp-565. Asp-603 provides a ligand contact to L-homocysteine. Asp-603 contacts L-methionine. Glu-609 serves as a coordination point for 5-methyltetrahydropteroyltri-L-glutamate. The Zn(2+) site is built by His-645, Cys-647, and Glu-669. Residue His-698 is the Proton donor of the active site. Cys-730 lines the Zn(2+) pocket.

It belongs to the vitamin-B12 independent methionine synthase family. The cofactor is Zn(2+).

It carries out the reaction 5-methyltetrahydropteroyltri-L-glutamate + L-homocysteine = tetrahydropteroyltri-L-glutamate + L-methionine. The protein operates within amino-acid biosynthesis; L-methionine biosynthesis via de novo pathway; L-methionine from L-homocysteine (MetE route): step 1/1. Its function is as follows. Catalyzes the transfer of a methyl group from 5-methyltetrahydrofolate to homocysteine resulting in methionine formation. This is 5-methyltetrahydropteroyltriglutamate--homocysteine methyltransferase from Bacillus anthracis (strain CDC 684 / NRRL 3495).